Consider the following 276-residue polypeptide: Release factor glutamine methyltransferase (276 aa).

S-adenosyl-L-methionine-binding positions include 117-121 (GTGTG), D140, W168, and N182. Residue 182-185 (NPPY) participates in substrate binding.

It belongs to the protein N5-glutamine methyltransferase family. PrmC subfamily.

The catalysed reaction is L-glutaminyl-[peptide chain release factor] + S-adenosyl-L-methionine = N(5)-methyl-L-glutaminyl-[peptide chain release factor] + S-adenosyl-L-homocysteine + H(+). Functionally, methylates the class 1 translation termination release factors RF1/PrfA and RF2/PrfB on the glutamine residue of the universally conserved GGQ motif. In Yersinia pestis, this protein is Release factor glutamine methyltransferase.